Here is a 1033-residue protein sequence, read N- to C-terminus: Tyrosine-protein kinase-like otk (1033 aa).

The N-terminal stretch at 1–22 (MTARMISIYGLVLASMMASVLA) is a signal peptide. The Extracellular portion of the chain corresponds to 23–581 (SSSRFQRLPQ…GGDGFLVTRA (559 aa)). 5 Ig-like C2-type domains span residues 25–114 (SRFQ…AKLS), 113–199 (LSVI…RVMS), 251–365 (PEDL…VPVS), 368–463 (PGVL…VAIN), and 468–558 (PKFS…VQLI). The N-linked (GlcNAc...) asparagine glycan is linked to Asn39. Cystine bridges form between Cys46/Cys95, Cys137/Cys188, Cys276/Cys354, and Cys399/Cys447. 7 N-linked (GlcNAc...) asparagine glycosylation sites follow: Asn336, Asn417, Asn429, Asn444, Asn457, Asn512, and Asn524. A disulfide bridge connects residues Cys490 and Cys542. Residues 582–602 (VLITMTVALAYIVLVVGLMLW) traverse the membrane as a helical segment. Topologically, residues 603-1033 (CRYRRQARKA…LSKAMQSAEK (431 aa)) are cytoplasmic. 2 disordered regions span residues 617–679 (LSTK…KKSA) and 718–760 (SPSD…KTSM). Over residues 655 to 673 (KSSGDAQKSDDTACSQQSR) the composition is skewed to polar residues. A Phosphoserine modification is found at Ser678. A Protein kinase; inactive domain is found at 692–1028 (LSELIQIGRG…QLGAALSKAM (337 aa)). Basic and acidic residues predominate over residues 720–731 (SDKDADTEKQHS).

The protein belongs to the protein kinase superfamily. Tyr protein kinase family. Insulin receptor subfamily. As to quaternary structure, interacts with plexA; component of a receptor complex that mediates the repulsive signaling in response to Semaphorin ligands.

The protein resides in the cell membrane. In terms of biological role, acts as a calcium-dependent, homophilic cell adhesion molecule that regulates neural recognition during the development of the nervous system. Component of the repulsive Plexin signaling response to regulate motor axon guidance at the embryonic stage. Also component of a receptor complex that is required in the adult visual system to innervate the lamina layer; specific targeting of R1-R6 axons. The chain is Tyrosine-protein kinase-like otk from Drosophila yakuba (Fruit fly).